We begin with the raw amino-acid sequence, 295 residues long: Bifunctional protein FolD (295 aa).

NADP(+) is bound by residues 164–166 (GRS), Ser193, and Ile234.

It belongs to the tetrahydrofolate dehydrogenase/cyclohydrolase family. In terms of assembly, homodimer.

The catalysed reaction is (6R)-5,10-methylene-5,6,7,8-tetrahydrofolate + NADP(+) = (6R)-5,10-methenyltetrahydrofolate + NADPH. It carries out the reaction (6R)-5,10-methenyltetrahydrofolate + H2O = (6R)-10-formyltetrahydrofolate + H(+). It functions in the pathway one-carbon metabolism; tetrahydrofolate interconversion. In terms of biological role, catalyzes the oxidation of 5,10-methylenetetrahydrofolate to 5,10-methenyltetrahydrofolate and then the hydrolysis of 5,10-methenyltetrahydrofolate to 10-formyltetrahydrofolate. In Flavobacterium johnsoniae (strain ATCC 17061 / DSM 2064 / JCM 8514 / BCRC 14874 / CCUG 350202 / NBRC 14942 / NCIMB 11054 / UW101) (Cytophaga johnsonae), this protein is Bifunctional protein FolD.